We begin with the raw amino-acid sequence, 388 residues long: GTPase Obg (388 aa).

Residues 4–162 (SNFVDYVKIY…MTVIMELKLL (159 aa)) form the Obg domain. One can recognise an OBG-type G domain in the interval 163 to 329 (ADVGLVGFPN…LKDILWEELN (167 aa)). Residues 169-176 (GFPNAGKS), 194-198 (FTTLE), 216-219 (DIPG), 283-286 (TKSD), and 310-312 (SSV) each bind GTP. Positions 176 and 196 each coordinate Mg(2+). The tract at residues 352-388 (LKDMGEDEELDYEYEEDADDEDDDLDYEYEEEDWEEK) is disordered. Over residues 356-388 (GEDEELDYEYEEDADDEDDDLDYEYEEEDWEEK) the composition is skewed to acidic residues.

The protein belongs to the TRAFAC class OBG-HflX-like GTPase superfamily. OBG GTPase family. In terms of assembly, monomer. Mg(2+) serves as cofactor.

Its subcellular location is the cytoplasm. An essential GTPase which binds GTP, GDP and possibly (p)ppGpp with moderate affinity, with high nucleotide exchange rates and a fairly low GTP hydrolysis rate. Plays a role in control of the cell cycle, stress response, ribosome biogenesis and in those bacteria that undergo differentiation, in morphogenesis control. This chain is GTPase Obg, found in Bacteroides thetaiotaomicron (strain ATCC 29148 / DSM 2079 / JCM 5827 / CCUG 10774 / NCTC 10582 / VPI-5482 / E50).